Here is a 358-residue protein sequence, read N- to C-terminus: CX3C chemokine receptor 1 (358 aa).

Over 1 to 26 the chain is Extracellular; the sequence is MHTTLPESTSENFEYYDLAEACDMGD. The chain crosses the membrane as a helical span at residues 27–47; sequence IVALGTVFVVILYSLVFAFGL. At 48–68 the chain is on the cytoplasmic side; sequence VGNLLVVFALINSQRSKSITD. A helical transmembrane segment spans residues 69 to 89; sequence IYLLNLALSDLLFVATLPFWT. At 90–105 the chain is on the extracellular side; that stretch reads HYVINEQGLHHATCKL. C103 and C176 form a disulfide bridge. Residues 106-126 form a helical membrane-spanning segment; sequence ITAFFFIGFFGGIFFITVISV. The Cytoplasmic segment spans residues 127–147; that stretch reads DRFLAIVLAANSMSNRTVQHG. Residues 148–168 traverse the membrane as a helical segment; it reads VTTSLGVWAAAILVATPQFMF. Over 169 to 186 the chain is Extracellular; that stretch reads TREKENECFGDYPEILQE. A helical membrane pass occupies residues 187–207; the sequence is IWPVILNTEINFLGFLLPLLI. The Cytoplasmic portion of the chain corresponds to 208-232; the sequence is MSYCYFRIMQTLFSCKNHKKAKAIR. Residues 233–253 traverse the membrane as a helical segment; the sequence is LIFLVVVVFFLFWTPYNVMIF. The Extracellular portion of the chain corresponds to 254–275; the sequence is LQTLNLYDFFPKCDVKRDLKLA. Residues 276–296 traverse the membrane as a helical segment; it reads ISVTETIAFSHCCLNPLIYAF. Topologically, residues 297-358 are cytoplasmic; it reads AGEKFRRYLY…TSDGDASILL (62 aa). T349 is subject to Phosphothreonine.

This sequence belongs to the G-protein coupled receptor 1 family. As to quaternary structure, found in a ternary complex with CX3CL1 and ITGAV:ITGB3 or ITGA4:ITGB1. This protein is not N-glycosylated which is unusual for G-protein-coupled receptors.

Its subcellular location is the cell membrane. Functionally, receptor for the C-X3-C chemokine fractalkine (CX3CL1) present on many early leukocyte cells; CX3CR1-CX3CL1 signaling exerts distinct functions in different tissue compartments, such as immune response, inflammation, cell adhesion and chemotaxis. CX3CR1-CX3CL1 signaling mediates cell migratory functions. Responsible for the recruitment of natural killer (NK) cells to inflamed tissues. Acts as a regulator of inflammation process leading to atherogenesis by mediating macrophage and monocyte recruitment to inflamed atherosclerotic plaques, promoting cell survival. Involved in airway inflammation by promoting interleukin 2-producing T helper (Th2) cell survival in inflamed lung. Involved in the migration of circulating monocytes to non-inflamed tissues, where they differentiate into macrophages and dendritic cells. Acts as a negative regulator of angiogenesis, probably by promoting macrophage chemotaxis. Plays a key role in brain microglia by regulating inflammatory response in the central nervous system (CNS) and regulating synapse maturation. Required to restrain the microglial inflammatory response in the CNS and the resulting parenchymal damage in response to pathological stimuli. Involved in brain development by participating in synaptic pruning, a natural process during which brain microglia eliminates extra synapses during postnatal development. Synaptic pruning by microglia is required to promote the maturation of circuit connectivity during brain development. Acts as an important regulator of the gut microbiota by controlling immunity to intestinal bacteria and fungi. Expressed in lamina propria dendritic cells in the small intestine, which form transepithelial dendrites capable of taking up bacteria in order to provide defense against pathogenic bacteria. Required to initiate innate and adaptive immune responses against dissemination of commensal fungi (mycobiota) component of the gut: expressed in mononuclear phagocytes (MNPs) and acts by promoting induction of antifungal IgG antibodies response to confer protection against disseminated C.albicans or C.auris infection. Also acts as a receptor for C-C motif chemokine CCL26, inducing cell chemotaxis. This chain is CX3C chemokine receptor 1, found in Bos taurus (Bovine).